The following is a 253-amino-acid chain: Phosphate import ATP-binding protein PstB (253 aa).

The ABC transporter domain occupies 5-248 (IETVNLNVYY…PEHELTEKYV (244 aa)). Residue 37-44 (GPSGCGKS) participates in ATP binding.

The protein belongs to the ABC transporter superfamily. Phosphate importer (TC 3.A.1.7) family. In terms of assembly, the complex is composed of two ATP-binding proteins (PstB), two transmembrane proteins (PstC and PstA) and a solute-binding protein (PstS).

It localises to the cell membrane. It carries out the reaction phosphate(out) + ATP + H2O = ADP + 2 phosphate(in) + H(+). Part of the ABC transporter complex PstSACB involved in phosphate import. Responsible for energy coupling to the transport system. In Thermococcus kodakarensis (strain ATCC BAA-918 / JCM 12380 / KOD1) (Pyrococcus kodakaraensis (strain KOD1)), this protein is Phosphate import ATP-binding protein PstB.